We begin with the raw amino-acid sequence, 1621 residues long: Nestin (1621 aa).

Residue methionine 1 is modified to N-acetylmethionine. The interval 1 to 7 (MEGCMGE) is head. A coil 1A region spans residues 8 to 43 (ESFQMWELNRRLEAYLARVKALEEQNELLSAELGGL). Residues 8-313 (ESFQMWELNR…TLLEAENSRL (306 aa)) form the IF rod domain. The interval 44–55 (RAQSADTSWRAH) is linker 1. Residues 56-151 (ADDELAALRA…VAHEEERVGL (96 aa)) form a coil 1B region. The tract at residues 152–173 (NAQAACAPRCPAPPRGPPAPAP) is linker 12. Residues 174-192 (EVEELARRLGEAWRGAVRG) are coil 2A. The tract at residues 193–195 (YQE) is linker 2. The segment at 196–313 (RVAHMETSLG…TLLEAENSRL (118 aa)) is coil 2B. Serine 311 carries the phosphoserine modification. The tract at residues 314–1621 (QTPGGGSKTS…DRESWSSGED (1308 aa)) is tail. The residue at position 315 (threonine 315) is a Phosphothreonine. Serine 325 bears the Phosphoserine mark. Phosphothreonine is present on threonine 338. 2 positions are modified to phosphoserine: serine 355 and serine 358. Residue threonine 388 is modified to Phosphothreonine. Residues serine 398, serine 471, serine 476, serine 548, serine 564, serine 578, serine 588, serine 638, serine 680, serine 702, serine 746, and serine 768 each carry the phosphoserine modification. The segment at 439–490 (SVLPGPEEPGGQRQEASTGQSPEDHASLAPPLSPDHSSLEAKDGESGGSRVF) is disordered. Residues 670–788 (LEKENQEPLR…PPEKVDLEPL (119 aa)) are disordered. 3 stretches are compositionally biased toward basic and acidic residues: residues 687–725 (EALR…LKTL), 736–770 (LETE…RSLG), and 779–788 (PPEKVDLEPL). Serine 790 bears the Phosphoserine mark. Lysine 811 is covalently cross-linked (Glycyl lysine isopeptide (Lys-Gly) (interchain with G-Cter in SUMO1); alternate). Lysine 811 is covalently cross-linked (Glycyl lysine isopeptide (Lys-Gly) (interchain with G-Cter in SUMO2); alternate). Serine 820, serine 831, and serine 842 each carry phosphoserine. At threonine 851 the chain carries Phosphothreonine. Phosphoserine is present on residues serine 894, serine 905, serine 913, and serine 934. The tract at residues 895–1593 (LGAWNLENLR…GSALKTSWAG (699 aa)) is disordered. 4 stretches are compositionally biased toward basic and acidic residues: residues 904-936 (RSPE…RSLE), 949-960 (QRWEDTVEKDQE), 980-994 (LNLR…KEEV), and 1012-1024 (GHPE…EQRG). Serine 1016 carries the phosphoserine modification. The span at 1085 to 1098 (GSEPAMGESAAGAE) shows a compositional bias: low complexity. The segment covering 1099 to 1110 (PGPGQGVGGLGD) has biased composition (gly residues). Basic and acidic residues-rich tracts occupy residues 1129-1145 (LEAK…KDLE) and 1159-1184 (GKSR…RGAE). Phosphoserine is present on residues serine 1261, serine 1282, serine 1286, serine 1310, serine 1347, serine 1409, serine 1418, and serine 1452. The span at 1275–1292 (PQEEGEESREESEEDELG) shows a compositional bias: acidic residues. The span at 1409–1428 (SDGFADEEESGEEGEEDQEE) shows a compositional bias: acidic residues. Low complexity-rich tracts occupy residues 1440–1453 (GSSV…SSSQ) and 1460–1470 (SDSVSVSVPWD). Residues 1486–1495 (ETESQDSAEP) are compositionally biased toward polar residues. 5 positions are modified to phosphoserine: serine 1496, serine 1498, serine 1577, serine 1617, and serine 1618.

This sequence belongs to the intermediate filament family. As to quaternary structure, forms homodimers and homotetramers in vitro. In mixtures with other intermediate filament proteins such as vimentin and alpha-internexin, tis protein preferentially forms heterodimers which can assemble to form intermediate filaments if nestin does not exceed 25%. Interacts with FHOD3. Constitutively phosphorylated. This increases during mitosis when the cytoplasmic intermediate filament network is reorganized. CNS stem cells.

Functionally, required for brain and eye development. Promotes the disassembly of phosphorylated vimentin intermediate filaments (IF) during mitosis and may play a role in the trafficking and distribution of IF proteins and other cellular factors to daughter cells during progenitor cell division. Required for survival, renewal and mitogen-stimulated proliferation of neural progenitor cells. The sequence is that of Nestin (NES) from Homo sapiens (Human).